Here is a 389-residue protein sequence, read N- to C-terminus: Trans-2-enoyl-CoA reductase [NADH] (389 aa).

NAD(+) is bound by residues 47-52 (GASTGY), 73-74 (FE), 110-111 (DA), and 138-139 (LA). Substrate is bound at residue Tyr224. The Proton donor role is filled by Tyr234. NAD(+) is bound by residues Lys243 and 272 to 274 (LVT).

It belongs to the TER reductase family. In terms of assembly, monomer.

It carries out the reaction a 2,3-saturated acyl-CoA + NAD(+) = a (2E)-enoyl-CoA + NADH + H(+). Its pathway is lipid metabolism; fatty acid biosynthesis. In terms of biological role, involved in the fatty acid synthesis (FAS II). Catalyzes the reduction of a carbon-carbon double bond in an enoyl moiety that is covalently linked to a coenzyme A (CoA). In Clostridium perfringens (strain 13 / Type A), this protein is Trans-2-enoyl-CoA reductase [NADH].